We begin with the raw amino-acid sequence, 354 residues long: Uroporphyrinogen decarboxylase (354 aa).

Substrate-binding positions include arginine 27–arginine 31, aspartate 77, tyrosine 154, serine 209, and histidine 327.

The protein belongs to the uroporphyrinogen decarboxylase family. As to quaternary structure, homodimer.

The protein resides in the cytoplasm. The enzyme catalyses uroporphyrinogen III + 4 H(+) = coproporphyrinogen III + 4 CO2. It participates in porphyrin-containing compound metabolism; protoporphyrin-IX biosynthesis; coproporphyrinogen-III from 5-aminolevulinate: step 4/4. Functionally, catalyzes the decarboxylation of four acetate groups of uroporphyrinogen-III to yield coproporphyrinogen-III. This Methylobacillus flagellatus (strain ATCC 51484 / DSM 6875 / VKM B-1610 / KT) protein is Uroporphyrinogen decarboxylase.